Reading from the N-terminus, the 352-residue chain is 3-dehydroquinate synthase (352 aa).

NAD(+) is bound by residues 60–65 (DGEGAK), 118–119 (TT), Lys-131, Lys-140, and 158–161 (FLET). Positions 173, 237, and 253 each coordinate Zn(2+).

This sequence belongs to the sugar phosphate cyclases superfamily. Dehydroquinate synthase family. NAD(+) serves as cofactor. Requires Co(2+) as cofactor. Zn(2+) is required as a cofactor.

The protein localises to the cytoplasm. It carries out the reaction 7-phospho-2-dehydro-3-deoxy-D-arabino-heptonate = 3-dehydroquinate + phosphate. It functions in the pathway metabolic intermediate biosynthesis; chorismate biosynthesis; chorismate from D-erythrose 4-phosphate and phosphoenolpyruvate: step 2/7. Its function is as follows. Catalyzes the conversion of 3-deoxy-D-arabino-heptulosonate 7-phosphate (DAHP) to dehydroquinate (DHQ). This Sulfurisphaera tokodaii (strain DSM 16993 / JCM 10545 / NBRC 100140 / 7) (Sulfolobus tokodaii) protein is 3-dehydroquinate synthase.